A 178-amino-acid polypeptide reads, in one-letter code: Ribosomal RNA small subunit methyltransferase G (178 aa).

S-adenosyl-L-methionine is bound by residues G54, L59, L105–E106, and R120.

It belongs to the methyltransferase superfamily. RNA methyltransferase RsmG family.

The protein localises to the cytoplasm. The enzyme catalyses guanosine(527) in 16S rRNA + S-adenosyl-L-methionine = N(7)-methylguanosine(527) in 16S rRNA + S-adenosyl-L-homocysteine. Specifically methylates the N7 position of guanine in position 527 of 16S rRNA. This is Ribosomal RNA small subunit methyltransferase G from Helicobacter acinonychis (strain Sheeba).